A 338-amino-acid polypeptide reads, in one-letter code: Citramalyl-CoA lyase, mitochondrial (338 aa).

A mitochondrion-targeting transit peptide spans 1-20; it reads MALCVLRNTVRGAAALPRLK. Substrate-binding residues include Tyr48, Lys55, and Lys59. 3 positions are modified to N6-acetyllysine: Lys55, Lys59, and Lys64. Residues Lys80 and Lys90 each carry the N6-acetyllysine; alternate modification. 2 positions are modified to N6-succinyllysine; alternate: Lys80 and Lys90. Arg105 is a binding site for substrate. Residues Glu169 and Asp204 each coordinate Mg(2+). 270-271 is a substrate binding site; sequence IH. N6-succinyllysine is present on Lys307. Asp318 is a catalytic residue.

Belongs to the HpcH/HpaI aldolase family. Citrate lyase beta subunit-like subfamily. Homotrimer. It depends on Mg(2+) as a cofactor. As to expression, detected in brown fat, brain, liver, kidney, heart, skeletal muscle and ovary (at protein level).

It localises to the mitochondrion. The enzyme catalyses glyoxylate + acetyl-CoA + H2O = (S)-malate + CoA + H(+). The catalysed reaction is propanoyl-CoA + glyoxylate + H2O = 3-methylmalate + CoA + H(+). It carries out the reaction (3S)-citramalyl-CoA = pyruvate + acetyl-CoA. It catalyses the reaction (S)-malyl-CoA + H2O = (S)-malate + CoA + H(+). Its function is as follows. Mitochondrial citramalyl-CoA lyase indirectly involved in the vitamin B12 metabolism. Converts citramalyl-CoA into acetyl-CoA and pyruvate in the C5-dicarboxylate catabolism pathway. The C5-dicarboxylate catabolism pathway is required to detoxify itaconate, a vitamin B12-poisoning metabolite. Also acts as a malate synthase in vitro, converting glyoxylate and acetyl-CoA to malate. Also displays malyl-CoA thioesterase activity. Also acts as a beta-methylmalate synthase in vitro, by mediating conversion of glyoxylate and propionyl-CoA to beta-methylmalate. Also has very weak citramalate synthase activity in vitro. This Mus musculus (Mouse) protein is Citramalyl-CoA lyase, mitochondrial.